The primary structure comprises 205 residues: Meiotic nuclear division protein 1 homolog (205 aa).

Ser2 is subject to N-acetylserine. Residues 83 to 173 adopt a coiled-coil conformation; the sequence is KRKLEALNSQ…EAANRWTDNI (91 aa).

The protein belongs to the MND1 family. Heterodimer with PSMC3IP/HOP2. MND1-PSMC3IP interacts with DMC1 and RAD51 and binds to ssDNA and dsDNA showing no preference for either form of DNA.

The protein resides in the nucleus. Functionally, required for proper homologous chromosome pairing and efficient cross-over and intragenic recombination during meiosis. Stimulates both DMC1- and RAD51-mediated homologous strand assimilation, which is required for the resolution of meiotic double-strand breaks. The polypeptide is Meiotic nuclear division protein 1 homolog (Mus musculus (Mouse)).